We begin with the raw amino-acid sequence, 87 residues long: DNA-directed RNA polymerase subunit omega (87 aa).

It belongs to the RNA polymerase subunit omega family. As to quaternary structure, the RNAP catalytic core consists of 2 alpha, 1 beta, 1 beta' and 1 omega subunit. When a sigma factor is associated with the core the holoenzyme is formed, which can initiate transcription.

It catalyses the reaction RNA(n) + a ribonucleoside 5'-triphosphate = RNA(n+1) + diphosphate. In terms of biological role, promotes RNA polymerase assembly. Latches the N- and C-terminal regions of the beta' subunit thereby facilitating its interaction with the beta and alpha subunits. The polypeptide is DNA-directed RNA polymerase subunit omega (Pseudomonas fluorescens (strain Pf0-1)).